An 809-amino-acid polypeptide reads, in one-letter code: MAMIIHDPVYKLWYAXRAKSNLPGLAPHKTESITTVLSLTNVKNKQATNSILLNKITDLVLGLKAFSIKSKGVRTTLRVNKHWITPKEFPRFVKLVVWCTRTQEHEDSFMKIIGKCDHIWQTAGPNFLFKYLKEVMRLSVRRIANIELEPSKKIFVKLNKFRFPNIIPLPICDQIIRDQNDQVLWASKRLIICLLTILSVHRVLPTKVVPDYSTIVDPFTGVSKTIDQKLLRKAIHLLNIKRVKQLKLKITGSMKAGPNGKISLLTSSVDALSFITQPTKIFTYLDFSVRVYKFRGLLLWMWMMCILLITLPYAIVSFMLGALIPIMGKLSVVYDQAGKARIVAITNSWIQTAFYSLHLHVFKLLKNIDQDGTFDQERPFKLLIKWLNEPTQKFYGFDLTAATDRLPIDLQVDILNIIFKNSPGSSWRSLLRIKYKSPQGFLTYAVGQPMGAYSSFAMLALTHHVIVQVAALNSGFTTRFTDYCILGDDIVIAHDTVASEYLKLMETLGLSISSGKSVISSEFTEFAKKLKGRNNFDIFYRSWFSIIHFEKQILHLCTVFELLRRGVCELYDLYPQYINKLPKIYLRYNLLIDWVVVAFTNQILIGDRPRADGIRLFDYFVGLEVIPPLLRIMLHTIKKDWNGLWNSIKYTLNKGFVVSQVRVGLPDWTELFLLPILPSTYIIIRDYCRSFNDLTKLFGEWWLLRFESESYQVSILDVIDRLAHTSIPNLDIHDKKKVKLTLDNLYKLSLIVNIPSGGARRYIEFLRFNGLKSPLIVERYIKDGIRIEKPLTLQGLHRSGDIQLGFKIS.

In terms of assembly, forms a ribonucleoprotein complex with the viral RNA. Since the viral RNA is not encapsidated, ribonucleoprotein complex formation appears to be the strategy to survive in the host as persistent virus.

It localises to the host mitochondrion. The enzyme catalyses RNA(n) + a ribonucleoside 5'-triphosphate = RNA(n+1) + diphosphate. RNA-directed RNA polymerase that replicates the viral (+) and (-) genome. In Cryphonectria parasitica mitovirus 1 (strain American chestnut tree/New Jersey/NB631) (CMV1), this protein is RNA-directed RNA polymerase.